The primary structure comprises 98 residues: NADH-ubiquinone oxidoreductase chain 4L (98 aa).

Transmembrane regions (helical) follow at residues 1–21 (MTPTHFSLNAAFMLGLAGLTF), 26–46 (LLSALLCLEGMMLSLFISMAL), and 59–79 (APMLLLAFSACEASAGLALLV).

The protein belongs to the complex I subunit 4L family. As to quaternary structure, core subunit of respiratory chain NADH dehydrogenase (Complex I) which is composed of 45 different subunits.

The protein localises to the mitochondrion inner membrane. The catalysed reaction is a ubiquinone + NADH + 5 H(+)(in) = a ubiquinol + NAD(+) + 4 H(+)(out). Its function is as follows. Core subunit of the mitochondrial membrane respiratory chain NADH dehydrogenase (Complex I) which catalyzes electron transfer from NADH through the respiratory chain, using ubiquinone as an electron acceptor. Part of the enzyme membrane arm which is embedded in the lipid bilayer and involved in proton translocation. In Danio rerio (Zebrafish), this protein is NADH-ubiquinone oxidoreductase chain 4L (mt-nd4l).